Here is a 305-residue protein sequence, read N- to C-terminus: MSDFDRVRDYLTALQDRICNVVETIDGQSHFHEDHWQRTEGGGGRTRLLRDGAVFEQAGIGFSDVCGTHLPPSASVRRPELAGANWRACGVSLVFHPKNPFVPTTHLNVRYFRAERDGKQVAAWFGGGFDLTPFYPFDEDVVHWHTVARDLCAPFGDERYAAHKRWCDEYFVLRHRNETRGVGGLFFDDLDKDFERDFAYQRAVGDGFLDAYFPIVTRRHDTPYGDRERAFQLYRRGRYVEFNLLFDRGTLFGLQSGGRAESILISLPPLVRWEYGYHPLPGSAEARLADYLLPRDWLNESRICE.

Position 92 (serine 92) interacts with substrate. 2 residues coordinate a divalent metal cation: histidine 96 and histidine 106. The active-site Proton donor is the histidine 106. A substrate-binding site is contributed by 108-110 (NVR). Residues histidine 145 and histidine 175 each contribute to the a divalent metal cation site. The interval 239 to 274 (YVEFNLLFDRGTLFGLQSGGRAESILISLPPLVRWE) is important for dimerization. 257–259 (GGR) is a substrate binding site.

It belongs to the aerobic coproporphyrinogen-III oxidase family. As to quaternary structure, homodimer. A divalent metal cation serves as cofactor.

Its subcellular location is the cytoplasm. The catalysed reaction is coproporphyrinogen III + O2 + 2 H(+) = protoporphyrinogen IX + 2 CO2 + 2 H2O. It functions in the pathway porphyrin-containing compound metabolism; protoporphyrin-IX biosynthesis; protoporphyrinogen-IX from coproporphyrinogen-III (O2 route): step 1/1. Involved in the heme biosynthesis. Catalyzes the aerobic oxidative decarboxylation of propionate groups of rings A and B of coproporphyrinogen-III to yield the vinyl groups in protoporphyrinogen-IX. The protein is Oxygen-dependent coproporphyrinogen-III oxidase of Xylella fastidiosa (strain 9a5c).